The sequence spans 749 residues: Poly(U)-binding-splicing factor rnp-6 (749 aa).

RRM domains lie at serine 102 to asparagine 176 and phenylalanine 207 to threonine 285. 2 disordered regions span residues alanine 323–valine 388 and isoleucine 457–arginine 480. Over residues proline 330–serine 354 the composition is skewed to low complexity. Residues asparagine 658–glutamine 739 form the RRM 3; atypical domain.

The protein belongs to the RRM half pint family.

The protein resides in the nucleus. In terms of biological role, DNA- and RNA-binding protein, involved in several nuclear processes such as pre-mRNA splicing, apoptosis and transcription regulation. Ensures the correct splicing of genes involved in immunity to promote longevity in response to infection by pathogenic bacteria such as S.aureus. The protein is Poly(U)-binding-splicing factor rnp-6 of Caenorhabditis elegans.